A 1397-amino-acid chain; its full sequence is Centlein (1397 aa).

2 disordered regions span residues 1–43 (MAAR…GLAG) and 56–76 (LWRG…GAAV). The residue at position 2 (A2) is an N-acetylalanine. Phosphoserine occurs at positions 5, 9, and 22. 2 coiled-coil regions span residues 95-126 (EEAK…KEFV) and 405-481 (VVNL…KLMA). 2 disordered regions span residues 422-449 (LKEK…SGKA) and 485-521 (CDQD…SEEL). Over residues 485–503 (CDQDFSEKGTEGKHKEPPV) the composition is skewed to basic and acidic residues. Coiled-coil stretches lie at residues 674 to 778 (KNEK…KALR), 973 to 1114 (ISLR…MELL), and 1152 to 1299 (SESN…LKKM). S1219 is modified (phosphoserine). T1334 carries the phosphothreonine modification.

As to quaternary structure, interacts with CEP250 and CEP68. Interacts with NEK2; the interaction leads to phosphorylation of CNTLN. In terms of processing, phosphorylated directly or indirectly by NEK2.

The protein localises to the cytoplasm. It is found in the cytoskeleton. The protein resides in the microtubule organizing center. Its subcellular location is the centrosome. It localises to the centriole. Its function is as follows. Required for centrosome cohesion and recruitment of CEP68 to centrosomes. The chain is Centlein from Mus musculus (Mouse).